We begin with the raw amino-acid sequence, 926 residues long: MEESGMAHESAEDLFHFNVGGWHFSVPRSKLSQFPDSLLWKEASALTSSESQRLFIDRDGSTFRHVHYYLYTSKLSFSSCAELNLLYEQALGLQLMPLLQTLDNLKEGKHHLRVRPADLPVAERASLNYWRTWKCISKPSEFPIKSPAFTGLHDKAPLGLMDTPLLDTEEEVHYCFLPLDLVAKYPSLVTEDNLLWLAETVALIECECSEFRFIVNFLRSQKILLPDNFSNIDVLEAEVEILEIPALTEAVRWYRMNMGGCSPTTCSPLSPGKGARTASLESVKPLYTMALGLLVKYPDSALGQLRIESTLDGSRLYITGNGVLFQHVKNWLGTCRLPLTETISEVYELCAFLDKRDITYEPIKVALKTHLEPRTLAPMDVLNEWTAEITVYSPQQIIKVYVGSHWYATTLQTLLKYPELLSNPQRVYWITYGQTLLIHGDGQMFRHILNFLRLGKLFLPSEFKEWPLFCQEVEEYHIPSLSEALAQCEAYKSWTQEKESENEEAFSIRRLHVVTEGPGSLVEFSRDTKETTAYMPVDFEDCSDRTPWNKAKGNLVRSNQMDEAEQYTRPIQVSLCRNAKRAGNPSTYSHCRGLCTNPGHWGSHPESPPKKKCTTINLTQKSETKDPPATPMQKLISLVREWDMVNCKQWEFQPLTATRSSPLEEATLQLPLGSEAASQPSTSAAWKAHSTASEKDPGPQAGAGAGAKDKGPEPTFKPYLPPKRAGTLKDWSKQRTKERESPAPEQPLPEASEVDSLGVILKVTHPPVVGSDGFCMFFEDSIIYTTEMDNLRHTTPTASPQPQEVTFLSFSLSWEEMFYAQKCHCFLADIIMDSIRQKDPKAITAKVVSLANRLWTLHISPKQFVVDLLAITGFKDDRHTQERLYSWVELTLPFARKYGRCMDLLIQRGLSRSVSYSILGKYLQED.

Residues 18-72 (NVGGWHFSVPRSKLSQFPDSLLWKEASALTSSESQRLFIDRDGSTFRHVHYYLYT) enclose the BTB 1 domain. Serine 270 bears the Phosphoserine mark. The 88-residue stretch at 398–485 (IKVYVGSHWY…YHIPSLSEAL (88 aa)) folds into the BTB 2 domain. The interval 673-751 (GSEAASQPST…PAPEQPLPEA (79 aa)) is disordered. Residues 730–742 (DWSKQRTKERESP) show a composition bias toward basic and acidic residues.

Identified in a complex with ZNF541, HDAC1 and HSPA2. Identified in a complex with ZNF541 and HDAC1. Identified in a complex with HDAC1, HDAC2, DNTTIP1 and ZNF541.

The protein resides in the nucleus. Functionally, transcription regulator which is essential for male fertility and for the completion of meiotic prophase in spermatocytes. Regulates progression of the pachytene stage of meiotic prophase and promotes the transcriptional activation activity ZNF541. Required for the organization of chromosomes during metaphase I. The sequence is that of BTB/POZ domain-containing protein KCTD19 (KCTD19) from Homo sapiens (Human).